Reading from the N-terminus, the 132-residue chain is Small ribosomal subunit protein uS8 (132 aa).

This sequence belongs to the universal ribosomal protein uS8 family. In terms of assembly, part of the 30S ribosomal subunit. Contacts proteins S5 and S12.

One of the primary rRNA binding proteins, it binds directly to 16S rRNA central domain where it helps coordinate assembly of the platform of the 30S subunit. The chain is Small ribosomal subunit protein uS8 from Rhodococcus erythropolis (strain PR4 / NBRC 100887).